The following is a 495-amino-acid chain: UDP-N-acetylmuramoyl-L-alanyl-D-glutamate--2,6-diaminopimelate ligase (495 aa).

UDP-N-acetyl-alpha-D-muramoyl-L-alanyl-D-glutamate contacts are provided by residues Leu-27, Ser-29, and 44-46 (HQA). Residue 116-122 (GTNGKTT) coordinates ATP. Residues Asn-157, 158–159 (TT), Ser-185, Gln-191, and Arg-193 contribute to the UDP-N-acetyl-alpha-D-muramoyl-L-alanyl-D-glutamate site. Position 225 is an N6-carboxylysine (Lys-225). Residues Arg-390, 414 to 417 (DNPR), Gly-465, and Glu-469 each bind meso-2,6-diaminopimelate. The Meso-diaminopimelate recognition motif signature appears at 414 to 417 (DNPR).

The protein belongs to the MurCDEF family. MurE subfamily. Mg(2+) is required as a cofactor. Carboxylation is probably crucial for Mg(2+) binding and, consequently, for the gamma-phosphate positioning of ATP.

The protein resides in the cytoplasm. The enzyme catalyses UDP-N-acetyl-alpha-D-muramoyl-L-alanyl-D-glutamate + meso-2,6-diaminopimelate + ATP = UDP-N-acetyl-alpha-D-muramoyl-L-alanyl-gamma-D-glutamyl-meso-2,6-diaminopimelate + ADP + phosphate + H(+). Its pathway is cell wall biogenesis; peptidoglycan biosynthesis. Catalyzes the addition of meso-diaminopimelic acid to the nucleotide precursor UDP-N-acetylmuramoyl-L-alanyl-D-glutamate (UMAG) in the biosynthesis of bacterial cell-wall peptidoglycan. The chain is UDP-N-acetylmuramoyl-L-alanyl-D-glutamate--2,6-diaminopimelate ligase from Shigella flexneri.